Here is a 371-residue protein sequence, read N- to C-terminus: Flagellar P-ring protein (371 aa).

An N-terminal signal peptide occupies residues Met-1–Ala-21.

This sequence belongs to the FlgI family. The basal body constitutes a major portion of the flagellar organelle and consists of four rings (L,P,S, and M) mounted on a central rod.

It is found in the periplasm. The protein resides in the bacterial flagellum basal body. Assembles around the rod to form the L-ring and probably protects the motor/basal body from shearing forces during rotation. This chain is Flagellar P-ring protein, found in Caulobacter sp. (strain K31).